Consider the following 516-residue polypeptide: Thioredoxin reductase 2, mitochondrial (516 aa).

62–79 (DYVKPTPVGTKWGIGGTC) provides a ligand contact to FAD. The cysteines at positions 79 and 84 are disulfide-linked. Catalysis depends on His-489, which acts as the Proton acceptor.

This sequence belongs to the class-I pyridine nucleotide-disulfide oxidoreductase family. In terms of assembly, homodimer. Requires FAD as cofactor.

The protein localises to the mitochondrion. It catalyses the reaction [thioredoxin]-dithiol + NADP(+) = [thioredoxin]-disulfide + NADPH + H(+). Functionally, thioredoxin system is a major player in glutathione metabolism, due to the demonstrated absence of a glutathione reductase. Functionally interacts with the Sod/Cat reactive oxidation species (ROS) defense system and thereby has a role in preadult development and life span. Lack of a glutathione reductase suggests antioxidant defense in Drosophila, and probably in related insects, differs fundamentally from that in other organisms. The chain is Thioredoxin reductase 2, mitochondrial from Drosophila melanogaster (Fruit fly).